Here is a 494-residue protein sequence, read N- to C-terminus: Glycogen synthase (494 aa).

An ADP-alpha-D-glucose-binding site is contributed by K15.

The protein belongs to the glycosyltransferase 1 family. Bacterial/plant glycogen synthase subfamily.

It carries out the reaction [(1-&gt;4)-alpha-D-glucosyl](n) + ADP-alpha-D-glucose = [(1-&gt;4)-alpha-D-glucosyl](n+1) + ADP + H(+). It participates in glycan biosynthesis; glycogen biosynthesis. In terms of biological role, synthesizes alpha-1,4-glucan chains using ADP-glucose. The chain is Glycogen synthase from Albidiferax ferrireducens (strain ATCC BAA-621 / DSM 15236 / T118) (Rhodoferax ferrireducens).